Here is a 314-residue protein sequence, read N- to C-terminus: Malate dehydrogenase (314 aa).

NAD(+) is bound at residue 9 to 15 (IGVGNVG). Substrate is bound by residues arginine 84 and arginine 90. NAD(+) contacts are provided by residues asparagine 97 and 120–122 (ISN). Substrate contacts are provided by asparagine 122 and arginine 153. Residue histidine 177 is the Proton acceptor of the active site.

The protein belongs to the LDH/MDH superfamily.

The catalysed reaction is (S)-malate + NAD(+) = oxaloacetate + NADH + H(+). Functionally, catalyzes the reversible oxidation of malate to oxaloacetate. This is Malate dehydrogenase from Aliarcobacter butzleri (strain RM4018) (Arcobacter butzleri).